The sequence spans 119 residues: C-C motif chemokine 24 (119 aa).

Positions M1 to S26 are cleaved as a signal peptide. 2 disulfide bridges follow: C33/C58 and C34/C74. Residues N54 and N115 are each glycosylated (N-linked (GlcNAc...) asparagine). The segment at P96 to V119 is disordered. The span at K101–V119 shows a compositional bias: basic residues.

This sequence belongs to the intercrine beta (chemokine CC) family. In terms of tissue distribution, highest expression in jejunum and spleen. Lower levels found in liver and lung. No expression detected in kidney, thymus, brain or testis.

It is found in the secreted. Functionally, chemotactic for resting T-lymphocytes, and eosinophils. Has lower chemotactic activity for neutrophils but none for monocytes and activated lymphocytes. Is a strong suppressor of colony formation by a multipotential hematopoietic progenitor cell line. Binds to CCR3. The polypeptide is C-C motif chemokine 24 (Mus musculus (Mouse)).